The chain runs to 1049 residues: Multiple C2 domain and transmembrane region protein 16 (1049 aa).

A C2 1 domain is found at 1–112 (MATTRKLVVE…VGQGEEALIY (112 aa)). Positions 136–249 (DEKPPPLKPT…PPQNQPDGED (114 aa)) are disordered. Basic and acidic residues-rich tracts occupy residues 153–170 (VEEKTEETKAEGPDESKP) and 226–238 (ESDKNEAEAKPVE). C2 domains follow at residues 302 to 426 (TSEI…PQWY), 460 to 582 (TAGN…SRWL), and 617 to 745 (VCSD…RNTY). The Ca(2+) site is built by Ser338, Asp390, Thr393, and Ser398. 2 helical membrane-spanning segments follow: residues 883–903 (VMLIWFPDLIVPTLAFYLFVI) and 989–1009 (ATGIFVGLCFFVALVLYLVPT).

It belongs to the MCTP family. Requires Ca(2+) as cofactor. As to expression, expressed in the vascular tissues of roots, cotyledons and rosette leaves. Accumulates in roots meristems and shoot apical meristems (SAMs). Observed in flowers.

The protein resides in the endoplasmic reticulum membrane. May function as a signaling molecule by regulating the trafficking of other regulators. This Arabidopsis thaliana (Mouse-ear cress) protein is Multiple C2 domain and transmembrane region protein 16.